A 353-amino-acid chain; its full sequence is Photosystem II D2 protein (353 aa).

N-acetylthreonine is present on Thr2. Thr2 bears the Phosphothreonine mark. The helical transmembrane segment at 41-61 threads the bilayer; that stretch reads CAYFALGGWFTGTTFVTSWYT. Position 118 (His118) interacts with chlorophyll a. The chain crosses the membrane as a helical span at residues 125 to 141; it reads GFMLRQFEIARSVQLRP. Positions 130 and 143 each coordinate pheophytin a. Residues 153 to 166 form a helical membrane-spanning segment; the sequence is VFVSVFLIYPLGQS. His198 is a chlorophyll a binding site. Residues 208–228 form a helical membrane-spanning segment; it reads AALLCAIHGATVENTLFEDGD. 2 residues coordinate a plastoquinone: His215 and Phe262. A Fe cation-binding site is contributed by His215. His269 lines the Fe cation pocket. A helical membrane pass occupies residues 279–295; it reads GLWMSALGVVGLALNLR.

The protein belongs to the reaction center PufL/M/PsbA/D family. As to quaternary structure, PSII is composed of 1 copy each of membrane proteins PsbA, PsbB, PsbC, PsbD, PsbE, PsbF, PsbH, PsbI, PsbJ, PsbK, PsbL, PsbM, PsbT, PsbX, PsbY, PsbZ, Psb30/Ycf12, at least 3 peripheral proteins of the oxygen-evolving complex and a large number of cofactors. It forms dimeric complexes. It depends on The D1/D2 heterodimer binds P680, chlorophylls that are the primary electron donor of PSII, and subsequent electron acceptors. It shares a non-heme iron and each subunit binds pheophytin, quinone, additional chlorophylls, carotenoids and lipids. There is also a Cl(-1) ion associated with D1 and D2, which is required for oxygen evolution. The PSII complex binds additional chlorophylls, carotenoids and specific lipids. as a cofactor.

It localises to the plastid. The protein localises to the chloroplast thylakoid membrane. It catalyses the reaction 2 a plastoquinone + 4 hnu + 2 H2O = 2 a plastoquinol + O2. In terms of biological role, photosystem II (PSII) is a light-driven water:plastoquinone oxidoreductase that uses light energy to abstract electrons from H(2)O, generating O(2) and a proton gradient subsequently used for ATP formation. It consists of a core antenna complex that captures photons, and an electron transfer chain that converts photonic excitation into a charge separation. The D1/D2 (PsbA/PsbD) reaction center heterodimer binds P680, the primary electron donor of PSII as well as several subsequent electron acceptors. D2 is needed for assembly of a stable PSII complex. The sequence is that of Photosystem II D2 protein from Oenothera argillicola (Appalachian evening primrose).